A 250-amino-acid chain; its full sequence is 3-deoxy-manno-octulosonate cytidylyltransferase (250 aa).

It belongs to the KdsB family.

The protein localises to the cytoplasm. It catalyses the reaction 3-deoxy-alpha-D-manno-oct-2-ulosonate + CTP = CMP-3-deoxy-beta-D-manno-octulosonate + diphosphate. Its pathway is nucleotide-sugar biosynthesis; CMP-3-deoxy-D-manno-octulosonate biosynthesis; CMP-3-deoxy-D-manno-octulosonate from 3-deoxy-D-manno-octulosonate and CTP: step 1/1. The protein operates within bacterial outer membrane biogenesis; lipopolysaccharide biosynthesis. Activates KDO (a required 8-carbon sugar) for incorporation into bacterial lipopolysaccharide in Gram-negative bacteria. The protein is 3-deoxy-manno-octulosonate cytidylyltransferase of Azorhizobium caulinodans (strain ATCC 43989 / DSM 5975 / JCM 20966 / LMG 6465 / NBRC 14845 / NCIMB 13405 / ORS 571).